The primary structure comprises 462 residues: ATP synthase subunit beta (462 aa).

151–158 serves as a coordination point for ATP; that stretch reads GGAGVGKT.

This sequence belongs to the ATPase alpha/beta chains family. F-type ATPases have 2 components, CF(1) - the catalytic core - and CF(0) - the membrane proton channel. CF(1) has five subunits: alpha(3), beta(3), gamma(1), delta(1), epsilon(1). CF(0) has four main subunits: a(1), b(1), b'(1) and c(9-12).

Its subcellular location is the cell inner membrane. It carries out the reaction ATP + H2O + 4 H(+)(in) = ADP + phosphate + 5 H(+)(out). Produces ATP from ADP in the presence of a proton gradient across the membrane. The catalytic sites are hosted primarily by the beta subunits. This chain is ATP synthase subunit beta, found in Pelodictyon phaeoclathratiforme (strain DSM 5477 / BU-1).